Reading from the N-terminus, the 180-residue chain is Large ribosomal subunit protein uL6 (180 aa).

Belongs to the universal ribosomal protein uL6 family. Part of the 50S ribosomal subunit.

In terms of biological role, this protein binds to the 23S rRNA, and is important in its secondary structure. It is located near the subunit interface in the base of the L7/L12 stalk, and near the tRNA binding site of the peptidyltransferase center. This Borrelia duttonii (strain Ly) protein is Large ribosomal subunit protein uL6.